The chain runs to 1375 residues: DNA-directed RNA polymerase subunit beta' (1375 aa).

C70, C72, C85, and C88 together coordinate Zn(2+). Residues D461, D463, and D465 each coordinate Mg(2+). Positions 797, 871, 878, and 881 each coordinate Zn(2+).

Belongs to the RNA polymerase beta' chain family. As to quaternary structure, the RNAP catalytic core consists of 2 alpha, 1 beta, 1 beta' and 1 omega subunit. When a sigma factor is associated with the core the holoenzyme is formed, which can initiate transcription. It depends on Mg(2+) as a cofactor. Zn(2+) is required as a cofactor.

The enzyme catalyses RNA(n) + a ribonucleoside 5'-triphosphate = RNA(n+1) + diphosphate. Its function is as follows. DNA-dependent RNA polymerase catalyzes the transcription of DNA into RNA using the four ribonucleoside triphosphates as substrates. The chain is DNA-directed RNA polymerase subunit beta' from Neorickettsia sennetsu (strain ATCC VR-367 / Miyayama) (Ehrlichia sennetsu).